An 88-amino-acid chain; its full sequence is RNA-binding protein Hfq (88 aa).

The Sm domain occupies Asp9–Val68. Residues Arg66 to Glu88 form a disordered region. Over residues Ser72 to Glu88 the composition is skewed to basic and acidic residues.

The protein belongs to the Hfq family. In terms of assembly, homohexamer.

Its function is as follows. RNA chaperone that binds small regulatory RNA (sRNAs) and mRNAs to facilitate mRNA translational regulation in response to envelope stress, environmental stress and changes in metabolite concentrations. Also binds with high specificity to tRNAs. The polypeptide is RNA-binding protein Hfq (Aliivibrio fischeri (strain ATCC 700601 / ES114) (Vibrio fischeri)).